Reading from the N-terminus, the 109-residue chain is NAD(P)H-quinone oxidoreductase subunit M (109 aa).

Belongs to the complex I NdhM subunit family. As to quaternary structure, NDH-1 can be composed of about 15 different subunits; different subcomplexes with different compositions have been identified which probably have different functions.

Its subcellular location is the cellular thylakoid membrane. It catalyses the reaction a plastoquinone + NADH + (n+1) H(+)(in) = a plastoquinol + NAD(+) + n H(+)(out). The enzyme catalyses a plastoquinone + NADPH + (n+1) H(+)(in) = a plastoquinol + NADP(+) + n H(+)(out). Its function is as follows. NDH-1 shuttles electrons from an unknown electron donor, via FMN and iron-sulfur (Fe-S) centers, to quinones in the respiratory and/or the photosynthetic chain. The immediate electron acceptor for the enzyme in this species is believed to be plastoquinone. Couples the redox reaction to proton translocation, and thus conserves the redox energy in a proton gradient. Cyanobacterial NDH-1 also plays a role in inorganic carbon-concentration. This is NAD(P)H-quinone oxidoreductase subunit M from Microcystis aeruginosa (strain NIES-843 / IAM M-2473).